A 283-amino-acid polypeptide reads, in one-letter code: Gap junction beta-1 protein (283 aa).

The Cytoplasmic segment spans residues 1-22 (MNWTGLYTLLSGVNRHSTAIGR). Residues 23–45 (VWLSVIFIFRIMVLVVAAESVWG) traverse the membrane as a helical segment. The Extracellular segment spans residues 46-75 (DEKSSFICNTLQPGCNSVCYDHFFPISHVR). The helical transmembrane segment at 76-95 (LWSLQLILVSTPALLVAMHV) threads the bilayer. Residues 96-130 (AHQQHIEKKMLRLEGHGDPIHLEEVKRHKVHISGT) lie on the Cytoplasmic side of the membrane. A helical transmembrane segment spans residues 131–153 (LWWTYVISVVFRLLFEAAFMYVF). At 154–191 (YLLYPGYAMVRLVKCDAYPCPNTVDCFVSRPTEKTVFT) the chain is on the extracellular side. Residues 192 to 214 (VFMLAASGICIILNVAEVVYLIV) form a helical membrane-spanning segment. Residues 215–283 (RACARRAQRR…AEKSDRCSAC (69 aa)) are Cytoplasmic-facing. Serine 233, serine 258, serine 266, and serine 277 each carry phosphoserine.

The protein belongs to the connexin family. Beta-type (group I) subfamily. A connexon is composed of a hexamer of connexins. Interacts with CNST.

The protein localises to the cell membrane. It is found in the cell junction. Its subcellular location is the gap junction. In terms of biological role, one gap junction consists of a cluster of closely packed pairs of transmembrane channels, the connexons, through which materials of low MW diffuse from one cell to a neighboring cell. This chain is Gap junction beta-1 protein (GJB1), found in Equus caballus (Horse).